Consider the following 305-residue polypeptide: NAD kinase 2 (305 aa).

The active-site Proton acceptor is aspartate 78. Residues 78–79 (DG), 152–153 (NE), aspartate 182, 193–198 (TAYSLS), and asparagine 251 contribute to the NAD(+) site.

It belongs to the NAD kinase family. A divalent metal cation is required as a cofactor.

It is found in the cytoplasm. It catalyses the reaction NAD(+) + ATP = ADP + NADP(+) + H(+). Its function is as follows. Involved in the regulation of the intracellular balance of NAD and NADP, and is a key enzyme in the biosynthesis of NADP. Catalyzes specifically the phosphorylation on 2'-hydroxyl of the adenosine moiety of NAD to yield NADP. The chain is NAD kinase 2 from Synechococcus sp. (strain ATCC 27144 / PCC 6301 / SAUG 1402/1) (Anacystis nidulans).